A 528-amino-acid chain; its full sequence is Cytochrome b5 reductase 4 (528 aa).

N-acetylmethionine is present on methionine 1. A disordered region spans residues 1–29; that stretch reads MLNVPSQAFPAPGSQQRVSSQGRSKVPLK. A compositionally biased stretch (low complexity) spans 13–24; it reads GSQQRVSSQGRS. The 77-residue stretch at 54-130 folds into the Cytochrome b5 heme-binding domain; sequence LIEVTEEELK…LKECLVGRMA (77 aa). Residues histidine 89 and histidine 112 each contribute to the heme site. Residues 172 to 263 form the CS domain; sequence LSSPSYDWFQ…KESVSWQCLG (92 aa). Residues 280–392 form the FAD-binding FR-type domain; the sequence is LYYRRCQLIS…SGPEGDFKVS (113 aa). FAD contacts are provided by residues 372 to 387 and 399 to 431; these read DRLQ…GPEG and DLFL…KVKL.

This sequence belongs to the flavoprotein pyridine nucleotide cytochrome reductase family. It depends on FAD as a cofactor. Ubiquitously expressed. Isoform 2 is expressed in testis, brain, skeletal muscle and in the male germline.

The protein resides in the endoplasmic reticulum. It catalyses the reaction 2 Fe(III)-[cytochrome b5] + NADH = 2 Fe(II)-[cytochrome b5] + NAD(+) + H(+). In terms of biological role, NADH-cytochrome b5 reductase involved in endoplasmic reticulum stress response pathway. Plays a critical role in protecting pancreatic beta-cells against oxidant stress, possibly by protecting the cell from excess buildup of reactive oxygen species (ROS). The polypeptide is Cytochrome b5 reductase 4 (Cyb5r4) (Mus musculus (Mouse)).